The chain runs to 622 residues: Ferredoxin-fold anticodon-binding domain-containing protein 1 homolog (622 aa).

One can recognise an FDX-ACB domain in the interval 529-622; the sequence is LYPPCYVHDV…IQRQLHVSPR (94 aa).

The protein is Ferredoxin-fold anticodon-binding domain-containing protein 1 homolog (Fdxacb1) of Mus musculus (Mouse).